A 503-amino-acid polypeptide reads, in one-letter code: Arginyl-tRNA--protein transferase 1 (503 aa).

This sequence belongs to the R-transferase family.

It is found in the cytoplasm. The enzyme catalyses an N-terminal L-alpha-aminoacyl-[protein] + L-arginyl-tRNA(Arg) = an N-terminal L-arginyl-L-aminoacyl-[protein] + tRNA(Arg) + H(+). Functionally, involved in the post-translational conjugation of arginine to the N-terminal aspartate or glutamate of a protein. This arginylation is required for degradation of the protein via the ubiquitin pathway. Does not arginylate cysteine residues. In Saccharomyces cerevisiae (strain ATCC 204508 / S288c) (Baker's yeast), this protein is Arginyl-tRNA--protein transferase 1 (ATE1).